We begin with the raw amino-acid sequence, 478 residues long: Cysteine protease ATG4B (478 aa).

Residues Met1–Asp15 are compositionally biased toward polar residues. The segment at Met1–Gln31 is disordered. Cys164 functions as the Nucleophile in the catalytic mechanism. Residues Asp361 and His363 contribute to the active site.

Belongs to the peptidase C54 family. As to quaternary structure, interacts with ATG8.

The protein resides in the cytoplasm. The enzyme catalyses [protein]-C-terminal L-amino acid-glycyl-phosphatidylethanolamide + H2O = [protein]-C-terminal L-amino acid-glycine + a 1,2-diacyl-sn-glycero-3-phosphoethanolamine. Functionally, cysteine protease that plays a key role in autophagy by mediating both proteolytic activation and delipidation of ATG8 family proteins. The protease activity is required for proteolytic activation of ATG8 family proteins: cleaves the C-terminal amino acid of ATG8 proteins to reveal a C-terminal glycine. Exposure of the glycine at the C-terminus is essential for ATG8 proteins conjugation to phosphatidylethanolamine (PE) and insertion to membranes, which is necessary for autophagy. In addition to the protease activity, also mediates delipidation of PE-conjugated ATG8 proteins. The polypeptide is Cysteine protease ATG4B (ATG4B) (Oryza sativa subsp. japonica (Rice)).